Here is a 213-residue protein sequence, read N- to C-terminus: Uracil phosphoribosyltransferase (213 aa).

5-phospho-alpha-D-ribose 1-diphosphate contacts are provided by residues R77, R102, and 129 to 137 (DPMLATGGS). Uracil contacts are provided by residues I198 and 203–205 (GDA). Position 204 (D204) interacts with 5-phospho-alpha-D-ribose 1-diphosphate.

It belongs to the UPRTase family. Requires Mg(2+) as cofactor.

The enzyme catalyses UMP + diphosphate = 5-phospho-alpha-D-ribose 1-diphosphate + uracil. Its pathway is pyrimidine metabolism; UMP biosynthesis via salvage pathway; UMP from uracil: step 1/1. With respect to regulation, allosterically activated by GTP. Catalyzes the conversion of uracil and 5-phospho-alpha-D-ribose 1-diphosphate (PRPP) to UMP and diphosphate. This Mycobacteroides abscessus (strain ATCC 19977 / DSM 44196 / CCUG 20993 / CIP 104536 / JCM 13569 / NCTC 13031 / TMC 1543 / L948) (Mycobacterium abscessus) protein is Uracil phosphoribosyltransferase.